The sequence spans 907 residues: Catenin alpha-1 (907 aa).

Over residues 870 to 879 (VKREKLDDGQ) the composition is skewed to basic and acidic residues. The disordered stretch occupies residues 870–895 (VKREKLDDGQTNKVKRSSQKKHINPV). Over residues 882–892 (KVKRSSQKKHI) the composition is skewed to basic residues.

It belongs to the vinculin/alpha-catenin family. Interacts with ctnnb1, jupa and cdh2. Interacts with cdh1 during early stages of oogenesis, interaction is no longer present when oocyte develops into the unfertilized egg. Expressed in the skin (at protein level). Expressed in the ovary.

It is found in the cell junction. The protein resides in the adherens junction. The protein localises to the cytoplasm. It localises to the cytoskeleton. Its subcellular location is the cell membrane. It is found in the nucleus. Associates with the cytoplasmic domain of a variety of cadherins, forming catenin and cadherin complexes which are further linked to the actin filament network and is thereby involved in cell-cell adhesion. Required for embryonic development, via maintenance of adherens junctions that facilitate the maintenance of the epithelial barrier. The sequence is that of Catenin alpha-1 from Danio rerio (Zebrafish).